The primary structure comprises 177 residues: Interleukin-19 (177 aa).

An N-terminal signal peptide occupies residues 1-24 (MKLQCVSLWLLGTILILCSVDNHG). Intrachain disulfides connect C28/C121, C75/C127, and C76/C129. N-linked (GlcNAc...) asparagine glycosylation is present at N56. N135 carries N-linked (GlcNAc...) asparagine glycosylation.

It belongs to the IL-10 family.

The protein localises to the secreted. Functionally, cytokine that functions as an anti-inflammatory and proangiogenic factor. Polarizes adaptive immunity to an anti-inflammatory phenotype through induction of T-helper 2 responses by both down-regulation of IFN-gamma and up-regulation of IL4 and IL13. Produced by osteocytes, stimulates granulopoiesis and neutrophil formation. Exerts its biological effect through a receptor complex consisting of a heterodimer of IL20RA and IL20RB. In turn, activates the Janus kinase (JAK) and signal transducer and activator of transcription (STAT) pathway, and importantly, STAT3. The sequence is that of Interleukin-19 (IL19) from Homo sapiens (Human).